The primary structure comprises 195 residues: Molybdenum cofactor guanylyltransferase (195 aa).

GTP contacts are provided by residues 10–12, lysine 23, asparagine 51, aspartate 69, and aspartate 99; that span reads LAG. Mg(2+) is bound at residue aspartate 99.

The protein belongs to the MobA family. Monomer. Mg(2+) is required as a cofactor.

It is found in the cytoplasm. It catalyses the reaction Mo-molybdopterin + GTP + H(+) = Mo-molybdopterin guanine dinucleotide + diphosphate. Functionally, transfers a GMP moiety from GTP to Mo-molybdopterin (Mo-MPT) cofactor (Moco or molybdenum cofactor) to form Mo-molybdopterin guanine dinucleotide (Mo-MGD) cofactor. This chain is Molybdenum cofactor guanylyltransferase, found in Shewanella putrefaciens (strain CN-32 / ATCC BAA-453).